We begin with the raw amino-acid sequence, 125 residues long: Protein ApaG (125 aa).

Residues Met1–His125 enclose the ApaG domain.

In Yersinia pseudotuberculosis serotype IB (strain PB1/+), this protein is Protein ApaG.